The primary structure comprises 648 residues: Threonine--tRNA ligase (648 aa).

In terms of domain architecture, TGS spans 1–63 (MTEINIEFPD…NENVKIEIVT (63 aa)). The segment at 243 to 541 (DHRVIGNNLD…LIEMYKGAFP (299 aa)) is catalytic. Residues cysteine 337, histidine 388, and histidine 518 each contribute to the Zn(2+) site.

It belongs to the class-II aminoacyl-tRNA synthetase family. As to quaternary structure, homodimer. The cofactor is Zn(2+).

It is found in the cytoplasm. The catalysed reaction is tRNA(Thr) + L-threonine + ATP = L-threonyl-tRNA(Thr) + AMP + diphosphate + H(+). Its function is as follows. Catalyzes the attachment of threonine to tRNA(Thr) in a two-step reaction: L-threonine is first activated by ATP to form Thr-AMP and then transferred to the acceptor end of tRNA(Thr). Also edits incorrectly charged L-seryl-tRNA(Thr). The protein is Threonine--tRNA ligase of Pediococcus pentosaceus (strain ATCC 25745 / CCUG 21536 / LMG 10740 / 183-1w).